The chain runs to 93 residues: uncharacterized protein (93 aa).

A signal peptide spans 1 to 22 (MSIPNLSSVTQLLSIATGLVST). N5 is a glycosylation site (N-linked (GlcNAc...) asparagine; by host).

This is an uncharacterized protein from Invertebrate iridescent virus 6 (IIV-6).